The primary structure comprises 215 residues: FGFR1 oncogene partner 2 homolog (215 aa).

The stretch at 35-183 (LLNKRVEAMK…SGLRELLGIS (149 aa)) forms a coiled coil.

Belongs to the SIKE family.

It is found in the cytoplasm. The polypeptide is FGFR1 oncogene partner 2 homolog (fgfr1op2) (Danio rerio (Zebrafish)).